The following is a 544-amino-acid chain: Ribosomal oxygenase 1 (544 aa).

Positions 1-78 are disordered; it reads MERKHMSALS…HEGERDCREM (78 aa). Over residues 10 to 19 the composition is skewed to polar residues; sequence SIYQSLSGGK. Positions 42 to 53 are enriched in basic residues; sequence PSKKATKKKGTK. The segment covering 63 to 78 has biased composition (basic and acidic residues); sequence SSEKEKHEGERDCREM. Positions 197–342 constitute a JmjC domain; the sequence is CSIRMLNPQA…DLMLKLMPAA (146 aa). Residues histidine 243, aspartate 245, and histidine 308 each contribute to the Fe cation site.

The protein belongs to the ROX family. NO66 subfamily. Fe(2+) serves as cofactor.

It localises to the nucleus. It is found in the nucleolus. The protein resides in the nucleoplasm. The enzyme catalyses N(6),N(6)-dimethyl-L-lysyl(36)-[histone H3] + 2 2-oxoglutarate + 2 O2 = L-lysyl(36)-[histone H3] + 2 formaldehyde + 2 succinate + 2 CO2. The catalysed reaction is N(6)-methyl-L-lysyl-[protein] + 2-oxoglutarate + O2 = L-lysyl-[protein] + formaldehyde + succinate + CO2. It carries out the reaction L-histidyl-[protein] + 2-oxoglutarate + O2 = (3S)-3-hydroxy-L-histidyl-[protein] + succinate + CO2. Functionally, oxygenase that can act as both a histone lysine demethylase and a ribosomal histidine hydroxylase. Specifically demethylates 'Lys-4' (H3K4me) and 'Lys-36' (H3K36me) of histone H3, thereby playing a central role in histone code. Preferentially demethylates trimethylated H3 'Lys-4' (H3K4me3) and monomethylated H3 'Lys-4' (H3K4me1) residues, while it has weaker activity for dimethylated H3 'Lys-36' (H3K36me2). Also catalyzes demethylation of non-histone proteins. Also catalyzes the hydroxylation of 60S ribosomal protein L8 on 'His-216', thereby playing a role in ribosome biogenesis. The chain is Ribosomal oxygenase 1 (riox1) from Danio rerio (Zebrafish).